The following is a 320-amino-acid chain: o-succinylbenzoate synthase (320 aa).

The active-site Proton donor is Lys133. Mg(2+) is bound by residues Asp161, Glu190, and Asp213. Residue Lys235 is the Proton acceptor of the active site.

This sequence belongs to the mandelate racemase/muconate lactonizing enzyme family. MenC type 1 subfamily. A divalent metal cation serves as cofactor.

The catalysed reaction is (1R,6R)-6-hydroxy-2-succinyl-cyclohexa-2,4-diene-1-carboxylate = 2-succinylbenzoate + H2O. It participates in quinol/quinone metabolism; 1,4-dihydroxy-2-naphthoate biosynthesis; 1,4-dihydroxy-2-naphthoate from chorismate: step 4/7. The protein operates within quinol/quinone metabolism; menaquinone biosynthesis. Functionally, converts 2-succinyl-6-hydroxy-2,4-cyclohexadiene-1-carboxylate (SHCHC) to 2-succinylbenzoate (OSB). This chain is o-succinylbenzoate synthase, found in Shigella sonnei (strain Ss046).